Consider the following 108-residue polypeptide: uncharacterized protein (108 aa).

A helical membrane pass occupies residues 10–32 (LQAPYILCTSFITLKIHNFFFFF).

Its subcellular location is the membrane. This is an uncharacterized protein from Saccharomyces cerevisiae (strain ATCC 204508 / S288c) (Baker's yeast).